We begin with the raw amino-acid sequence, 67 residues long: Alpha-toxin Cn12 (67 aa).

Positions 1–66 constitute an LCN-type CS-alpha/beta domain; that stretch reads RDGYPLASNG…WGDSGTGPCR (66 aa). 4 disulfide bridges follow: Cys-11–Cys-65, Cys-15–Cys-40, Cys-25–Cys-45, and Cys-29–Cys-47.

In terms of tissue distribution, expressed by the venom gland.

Its subcellular location is the secreted. In terms of biological role, alpha toxins bind voltage-independently at site-3 of sodium channels (Nav) and inhibit the inactivation of the activated channels, thereby blocking neuronal transmission. This toxin binds, in vitro, to sodium channels and inhibits the inactivation of the activated channels. Seems not toxic to mice, crickets and sweet-water shrimps. The protein is Alpha-toxin Cn12 of Centruroides noxius (Mexican scorpion).